A 158-amino-acid chain; its full sequence is Antitoxin TacA (158 aa).

This sequence belongs to the TacA antitoxin family. Forms a complex with cognate toxin TacT.

Functionally, antitoxin component of a type II toxin-antitoxin (TA) system. Counteracts the toxic effect of cognate toxin TacT. In terms of biological role, tacA-TacT both represses and derepresses expression of its own operon. This is Antitoxin TacA from Mycobacterium tuberculosis (strain ATCC 25618 / H37Rv).